The primary structure comprises 414 residues: COUP transcription factor 2 (414 aa).

A disordered region spans residues 1-72 (MAMVVSTWRD…PGGPGSDKQQ (72 aa)). The span at 27-37 (PPVPGPPPGAP) shows a compositional bias: pro residues. Residues 38-54 (HTPQTPGQGGPASTPAQ) are compositionally biased toward low complexity. A Phosphothreonine modification is found at threonine 51. The segment at residues 76–151 (HIECVVCGDK…VGMRREAVQR (76 aa)) is a DNA-binding region (nuclear receptor). 2 consecutive NR C4-type zinc fingers follow at residues 79–99 (CVVCGDKSSGKHYGQFTCEGC) and 115–139 (CRANRNCPIDQHHRNQCQYCRLKKC). The segment at 117-414 (ANRNCPIDQH…SFNWPYMAIQ (298 aa)) is interaction with ZFPM2. The 227-residue stretch at 177–403 (YLSGYISLLL…TLIRDMLLSG (227 aa)) folds into the NR LBD domain. Residues 337 to 414 (LQEKSQCALE…SFNWPYMAIQ (78 aa)) form an important for dimerization region.

This sequence belongs to the nuclear hormone receptor family. NR2 subfamily. In terms of assembly, interacts with SQSTM1. Binds DNA as a dimer; homodimer or heterodimer with NR2F6. Interacts with NCOA1, NCOA2, NCOA3 and PPARGC1A. Interacts with ZFPM2.

The protein localises to the nucleus. In terms of biological role, ligand-activated transcription factor. Activated by high concentrations of 9-cis-retinoic acid and all-trans-retinoic acid, but not by dexamethasone, cortisol or progesterone (in vitro). Regulation of the apolipoprotein A-I gene transcription. Binds to DNA site A. May be required to establish ovary identity during early gonad development. The sequence is that of COUP transcription factor 2 (Nr2f2) from Rattus norvegicus (Rat).